The sequence spans 308 residues: MVKPNKLANNNYLSSFDMTTDEFINILDLAKNFKNKKINIDPNNKVLGLIFDKSSTRTRVSFQVAMSRLGGTTIDLNPITSQIGRGEPIKDTARVLSRYCDVIAIRTFNHSDLEEYAKWSTIPVINALTDLEHPCQALADFLTIQEEFIDFRNVVLTFIGDGNNVANSLILCGALLGVEVRIACPRGYEPNVSVINKALEIYKNKNLLKIIHDPYDAVLGANVLYTDVWSSMGEENQKEDKDKDFKGFTINSSLVRKANKDAIILHCLPAYRGKEISAEVFESKISRIFKQAENRLHVQQALLAGLLS.

Residues 55 to 58 (STRT), Gln82, Arg106, and 133 to 136 (HPCQ) contribute to the carbamoyl phosphate site. L-ornithine-binding positions include Asn164, Asp227, and 231 to 232 (SM). Carbamoyl phosphate is bound by residues 267-268 (CL) and Arg295.

This sequence belongs to the aspartate/ornithine carbamoyltransferase superfamily. OTCase family.

It is found in the cytoplasm. It carries out the reaction carbamoyl phosphate + L-ornithine = L-citrulline + phosphate + H(+). Its pathway is amino-acid biosynthesis; L-arginine biosynthesis; L-arginine from L-ornithine and carbamoyl phosphate: step 1/3. Reversibly catalyzes the transfer of the carbamoyl group from carbamoyl phosphate (CP) to the N(epsilon) atom of ornithine (ORN) to produce L-citrulline. The sequence is that of Ornithine carbamoyltransferase from Prochlorococcus marinus (strain MIT 9312).